A 359-amino-acid chain; its full sequence is Protein-L-isoaspartate O-methyltransferase domain-containing protein 2 (359 aa).

Residue glycine 2 is the site of N-myristoyl glycine attachment. The active site involves serine 64. AdoMet binding motif stretches follow at residues 85–94, 160–164, and 181–191; these read LNLGSGTGYL, YDRVY, and LKVGGILVMPL. The tract at residues 240-250 is BC-box; that stretch reads VRSLQDLARLA. Residues 301–328 are disordered; the sequence is SNPSDDTSCEDAEEDRREVAERTLQETK. The segment covering 314 to 328 has biased composition (basic and acidic residues); that stretch reads EDRREVAERTLQETK. The interval 343 to 346 is CUL-box; sequence LPLP.

This sequence belongs to the methyltransferase superfamily. L-isoaspartyl/D-aspartyl protein methyltransferase family.

Its subcellular location is the cytoplasm. In terms of biological role, may act as a substrate recognition component of an ECS (Elongin BC-CUL5-SOCS-box protein) E3 ubiquitin ligase complex which mediates the ubiquitination and subsequent proteasomal degradation of target proteins. May bind to the methyltransferase cofactor S-adenosylmethionine (AdoMet) via the N-terminal AdoMet binding motif, but probably does not display methyltransferase activity. The sequence is that of Protein-L-isoaspartate O-methyltransferase domain-containing protein 2 (Pcmtd2) from Mus musculus (Mouse).